Here is a 253-residue protein sequence, read N- to C-terminus: tRNA uridine(34) hydroxylase (253 aa).

The Rhodanese domain maps to 127-221 (HGRPLVLLDT…YFEDVGGEGY (95 aa)). Residue C181 is the Cysteine persulfide intermediate of the active site.

It belongs to the TrhO family.

The enzyme catalyses uridine(34) in tRNA + AH2 + O2 = 5-hydroxyuridine(34) in tRNA + A + H2O. Catalyzes oxygen-dependent 5-hydroxyuridine (ho5U) modification at position 34 in tRNAs. This Xanthomonas campestris pv. campestris (strain B100) protein is tRNA uridine(34) hydroxylase.